A 94-amino-acid chain; its full sequence is C-C motif chemokine 17 (94 aa).

A signal peptide spans Met1–Ala23. 2 disulfide bridges follow: Cys33-Cys57 and Cys34-Cys73.

This sequence belongs to the intercrine beta (chemokine CC) family.

It localises to the secreted. Chemokine, which displays chemotactic activity for T lymphocytes, preferentially Th2 cells, but not monocytes or granulocytes. Therefore plays an important role in a wide range of inflammatory and immunological processes. Acts by binding to CCR4 at T-cell surface. Mediates GM-CSF/CSF2-driven pain and inflammation. In the brain, required to maintain the typical, highly branched morphology of hippocampal microglia under homeostatic conditions. May be important for the appropriate adaptation of microglial morphology and synaptic plasticity to acute lipopolysaccharide (LPS)-induced neuroinflammation. Plays a role in wound healing, mainly by inducing fibroblast migration into the wound. In Macaca mulatta (Rhesus macaque), this protein is C-C motif chemokine 17 (CCL17).